The primary structure comprises 66 residues: Large ribosomal subunit protein bL35 (66 aa).

Residues 1 to 16 (MPKQKTHRASAKRFKR) show a composition bias toward basic residues. The interval 1–21 (MPKQKTHRASAKRFKRTGSGG) is disordered.

It belongs to the bacterial ribosomal protein bL35 family.

This chain is Large ribosomal subunit protein bL35, found in Streptococcus pneumoniae serotype 2 (strain D39 / NCTC 7466).